Reading from the N-terminus, the 394-residue chain is Glycerol-1-phosphate dehydrogenase [NAD(P)+] (394 aa).

Residues Asp54, 116-120 (GTIHD), and 138-141 (TAPS) each bind NAD(+). Position 143 (Asp143) interacts with substrate. An NAD(+)-binding site is contributed by Ser147. Position 190 (Asp190) interacts with substrate. Asp190 and His270 together coordinate Ni(2+). Residue His274 coordinates substrate. His290 provides a ligand contact to Ni(2+).

This sequence belongs to the glycerol-1-phosphate dehydrogenase family. In terms of assembly, homodimer. Requires Ni(2+) as cofactor.

It is found in the cytoplasm. It catalyses the reaction sn-glycerol 1-phosphate + NAD(+) = dihydroxyacetone phosphate + NADH + H(+). It carries out the reaction sn-glycerol 1-phosphate + NADP(+) = dihydroxyacetone phosphate + NADPH + H(+). Functionally, catalyzes the NAD(P)H-dependent reduction of dihydroxyacetonephosphate (DHAP or glycerone phosphate) to glycerol 1-phosphate (G1P). The G1P thus generated is probably used for the synthesis of phosphoglycerolipids in Gram-positive bacterial species. This Bacillus velezensis (strain DSM 23117 / BGSC 10A6 / LMG 26770 / FZB42) (Bacillus amyloliquefaciens subsp. plantarum) protein is Glycerol-1-phosphate dehydrogenase [NAD(P)+].